The primary structure comprises 123 residues: Small ribosomal subunit protein uS12 (123 aa).

Asp89 is modified (3-methylthioaspartic acid).

The protein belongs to the universal ribosomal protein uS12 family. In terms of assembly, part of the 30S ribosomal subunit. Contacts proteins S8 and S17. May interact with IF1 in the 30S initiation complex.

Functionally, with S4 and S5 plays an important role in translational accuracy. Its function is as follows. Interacts with and stabilizes bases of the 16S rRNA that are involved in tRNA selection in the A site and with the mRNA backbone. Located at the interface of the 30S and 50S subunits, it traverses the body of the 30S subunit contacting proteins on the other side and probably holding the rRNA structure together. The combined cluster of proteins S8, S12 and S17 appears to hold together the shoulder and platform of the 30S subunit. This Methylobacterium radiotolerans (strain ATCC 27329 / DSM 1819 / JCM 2831 / NBRC 15690 / NCIMB 10815 / 0-1) protein is Small ribosomal subunit protein uS12.